The primary structure comprises 814 residues: Protein ADP-ribosyltransferase PARP3 (814 aa).

Composition is skewed to basic and acidic residues over residues 1-19 (MKVHETRSHAHMSGDEQKG) and 27-48 (EGKLPESEQSQKKAKPENDDGR). The disordered stretch occupies residues 1–52 (MKVHETRSHAHMSGDEQKGNLRKHKAEGKLPESEQSQKKAKPENDDGRSVNG). The region spanning 38–186 (KKAKPENDDG…KRELGSADKP (149 aa)) is the PADR1 zinc-binding domain. Residues 105-150 (GALAKCPLCGGTLICDNEKRFVCGGEISEWCSCVFSTKDPPRKEEP) are zinc ribbon. 4 residues coordinate Zn(2+): Cys-110, Cys-113, Cys-127, and Cys-137. 2 TPR repeats span residues 182 to 215 (SADKPFVGMMISLMGRLTRTHQYWKKKIERNGGK) and 277 to 310 (DLSVEGKGIPWDKQDPSEEAIESFSAELKMYGKR). Residues 187–274 (FVGMMISLMG…EAQPLEAYDV (88 aa)) enclose the BRCT domain. The 101-residue stretch at 322 to 422 (GGKIFEKDGL…KKIQKKPHKF (101 aa)) folds into the WGR domain. One can recognise a PARP alpha-helical domain in the interval 449–568 (HCKLDSFVAN…DINTASRLIG (120 aa)). The PARP catalytic domain maps to 577-808 (DPLSDRYKKL…VKYEEKGTEI (232 aa)).

This sequence belongs to the ARTD/PARP family.

The protein localises to the nucleus. It catalyses the reaction L-aspartyl-[protein] + NAD(+) = 4-O-(ADP-D-ribosyl)-L-aspartyl-[protein] + nicotinamide. The catalysed reaction is L-glutamyl-[protein] + NAD(+) = 5-O-(ADP-D-ribosyl)-L-glutamyl-[protein] + nicotinamide. Its function is as follows. Involved in the base excision repair (BER) pathway, by catalyzing the poly(ADP-ribosyl)ation of a limited number of acceptor proteins involved in chromatin architecture and in DNA metabolism. This modification follows DNA damages and appears as an obligatory step in a detection/signaling pathway leading to the reparation of DNA strand breaks. The polypeptide is Protein ADP-ribosyltransferase PARP3 (PARP3) (Arabidopsis thaliana (Mouse-ear cress)).